Here is an 835-residue protein sequence, read N- to C-terminus: Serine/threonine-protein kinase TNNI3K (835 aa).

Residues 21 to 51 are a coiled coil; sequence SESYVITIERLEDDLQIKEKELTELRNIFGS. 10 ANK repeats span residues 66-96, 100-129, 133-162, 166-195, 199-228, 234-263, 269-298, 304-335, 339-368, and 381-410; these read NGLS…RPSR, NGFT…DIQQ, GGLT…NVNI, VFFT…DVNV, VGDR…KADV, EDHV…EVQP, YGDT…TESL, FSET…NINH, DGHT…DMNL, and DEQT…PQDE. In terms of domain architecture, Protein kinase spans 463–723; it reads IEFHEIIGSG…EVVMKLEECL (261 aa). ATP is bound by residues 469–477 and Lys490; that span reads IGSGSFGKV. The Proton acceptor role is filled by Asp588. A compositionally biased stretch (low complexity) spans 732–746; that stretch reads ASSNSSGSLSPSSSS. The tract at residues 732-751 is disordered; the sequence is ASSNSSGSLSPSSSSDCLVN.

The protein belongs to the protein kinase superfamily. TKL Ser/Thr protein kinase family. MAP kinase kinase kinase subfamily. In terms of assembly, interacts with TNNI3, ACTC1, ACTA1, MYBPC3, AIP, FABP3 and HADHB. Mg(2+) serves as cofactor. In terms of processing, autophosphorylated. Highly expressed in both adult and fetal heart.

The protein localises to the nucleus. It localises to the cytoplasm. It catalyses the reaction L-seryl-[protein] + ATP = O-phospho-L-seryl-[protein] + ADP + H(+). It carries out the reaction L-threonyl-[protein] + ATP = O-phospho-L-threonyl-[protein] + ADP + H(+). In terms of biological role, may play a role in cardiac physiology. This is Serine/threonine-protein kinase TNNI3K from Homo sapiens (Human).